The following is a 266-amino-acid chain: Diphthine synthase (266 aa).

S-adenosyl-L-methionine is bound by residues L9, D84, V87, S112–I113, L169, A210, and H235.

Belongs to the diphthine synthase family. As to quaternary structure, homodimer.

It carries out the reaction 2-[(3S)-amino-3-carboxypropyl]-L-histidyl-[translation elongation factor 2] + 3 S-adenosyl-L-methionine = diphthine-[translation elongation factor 2] + 3 S-adenosyl-L-homocysteine + 3 H(+). It participates in protein modification; peptidyl-diphthamide biosynthesis. S-adenosyl-L-methionine-dependent methyltransferase that catalyzes the trimethylation of the amino group of the modified target histidine residue in translation elongation factor 2 (EF-2), to form an intermediate called diphthine. The three successive methylation reactions represent the second step of diphthamide biosynthesis. The polypeptide is Diphthine synthase (Methanosarcina acetivorans (strain ATCC 35395 / DSM 2834 / JCM 12185 / C2A)).